The sequence spans 351 residues: Anthranilate phosphoribosyltransferase (351 aa).

5-phospho-alpha-D-ribose 1-diphosphate is bound by residues Gly80, 83–84, Thr88, 90–93, 108–116, and Ser120; these read GD, NVST, and KHGNRSVTS. Gly80 provides a ligand contact to anthranilate. Ser92 serves as a coordination point for Mg(2+). Asn111 contributes to the anthranilate binding site. Arg166 contacts anthranilate. Asp229 and Glu230 together coordinate Mg(2+).

Belongs to the anthranilate phosphoribosyltransferase family. As to quaternary structure, homodimer. Mg(2+) serves as cofactor.

The catalysed reaction is N-(5-phospho-beta-D-ribosyl)anthranilate + diphosphate = 5-phospho-alpha-D-ribose 1-diphosphate + anthranilate. Its pathway is amino-acid biosynthesis; L-tryptophan biosynthesis; L-tryptophan from chorismate: step 2/5. Functionally, catalyzes the transfer of the phosphoribosyl group of 5-phosphorylribose-1-pyrophosphate (PRPP) to anthranilate to yield N-(5'-phosphoribosyl)-anthranilate (PRA). The chain is Anthranilate phosphoribosyltransferase from Prosthecochloris aestuarii (strain DSM 271 / SK 413).